The following is a 378-amino-acid chain: Erythronate-4-phosphate dehydrogenase (378 aa).

Substrate-binding residues include Ser-45 and Thr-66. The NAD(+) site is built by Asp-146 and Thr-175. Residue Arg-208 is part of the active site. An NAD(+)-binding site is contributed by Asp-232. Residue Glu-237 is part of the active site. His-254 (proton donor) is an active-site residue. Position 257 (Gly-257) interacts with NAD(+). Residue Tyr-258 participates in substrate binding.

Belongs to the D-isomer specific 2-hydroxyacid dehydrogenase family. PdxB subfamily. As to quaternary structure, homodimer.

Its subcellular location is the cytoplasm. The catalysed reaction is 4-phospho-D-erythronate + NAD(+) = (R)-3-hydroxy-2-oxo-4-phosphooxybutanoate + NADH + H(+). It functions in the pathway cofactor biosynthesis; pyridoxine 5'-phosphate biosynthesis; pyridoxine 5'-phosphate from D-erythrose 4-phosphate: step 2/5. Its function is as follows. Catalyzes the oxidation of erythronate-4-phosphate to 3-hydroxy-2-oxo-4-phosphonooxybutanoate. The sequence is that of Erythronate-4-phosphate dehydrogenase from Escherichia coli O6:K15:H31 (strain 536 / UPEC).